Here is a 171-residue protein sequence, read N- to C-terminus: 3-hydroxydecanoyl-[acyl-carrier-protein] dehydratase (171 aa).

Residue His70 is part of the active site.

It belongs to the thioester dehydratase family. FabA subfamily. As to quaternary structure, homodimer.

The protein localises to the cytoplasm. The catalysed reaction is a (3R)-hydroxyacyl-[ACP] = a (2E)-enoyl-[ACP] + H2O. It carries out the reaction (3R)-hydroxydecanoyl-[ACP] = (2E)-decenoyl-[ACP] + H2O. It catalyses the reaction (2E)-decenoyl-[ACP] = (3Z)-decenoyl-[ACP]. It functions in the pathway lipid metabolism; fatty acid biosynthesis. Necessary for the introduction of cis unsaturation into fatty acids. Catalyzes the dehydration of (3R)-3-hydroxydecanoyl-ACP to E-(2)-decenoyl-ACP and then its isomerization to Z-(3)-decenoyl-ACP. Can catalyze the dehydratase reaction for beta-hydroxyacyl-ACPs with saturated chain lengths up to 16:0, being most active on intermediate chain length. This is 3-hydroxydecanoyl-[acyl-carrier-protein] dehydratase from Photobacterium profundum (strain SS9).